Consider the following 137-residue polypeptide: L-ectoine synthase (137 aa).

The disordered stretch occupies residues 118 to 137 (VHREDGSYAPADEADDQKPL).

The protein belongs to the ectoine synthase family.

It carries out the reaction (2S)-4-acetamido-2-aminobutanoate = L-ectoine + H2O. It functions in the pathway amine and polyamine biosynthesis; ectoine biosynthesis; L-ectoine from L-aspartate 4-semialdehyde: step 3/3. With respect to regulation, seems to require potassium ions for its activity and stability. Slightly inhibited by N-ethylmaleimide. Its function is as follows. Catalyzes the circularization of gamma-N-acetyl-alpha,gamma-diaminobutyric acid (ADABA) to ectoine (1,4,5,6-tetrahydro-2-methyl-4-pyrimidine carboxylic acid), which is an excellent osmoprotectant. Does not act on N-acetylated amino acids like N-alpha-acetyl-L-asparagine,N-alpha-acetyl-L-ornithine, N-alpha-acetyl-L-lysine and N-epsilon-acetyl-L-lysine. The protein is L-ectoine synthase (ectC) of Halomonas elongata (strain ATCC 33173 / DSM 2581 / NBRC 15536 / NCIMB 2198 / 1H9).